The chain runs to 243 residues: Membrane selenoprotein (243 aa).

The interval glycine 12–glutamate 63 is disordered. Selenocysteine 20 is a non-standard amino acid (selenocysteine). Composition is skewed to polar residues over residues isoleucine 30 to lysine 43 and glycine 53 to glutamate 63. The next 4 membrane-spanning stretches (helical) occupy residues isoleucine 74–isoleucine 94, valine 102–leucine 122, isoleucine 144–leucine 164, and valine 199–glycine 219. Position 88 (selenocysteine 88) is a non-standard amino acid, selenocysteine.

The protein localises to the membrane. This is Membrane selenoprotein (msp) from Dictyostelium discoideum (Social amoeba).